The following is a 269-amino-acid chain: Putative hydro-lyase Atu3911 (269 aa).

It belongs to the D-glutamate cyclase family.

The chain is Putative hydro-lyase Atu3911 from Agrobacterium fabrum (strain C58 / ATCC 33970) (Agrobacterium tumefaciens (strain C58)).